Here is a 592-residue protein sequence, read N- to C-terminus: MRRTHYCGELNAKNIGEKVYLSGWVHRIRHHGGLIFIDLRDRSGIVQLVFDPSISKESYDIADTVGNEWVISVEGKVRKRPEGMENPKIPTGEIEIEVEKIKIENTAKPLPFNLWTNKEIDEIVRLKYRYLDLRRDKMQSNIIFRHNFILSIRNFLAKNGFIEIETPYLIVSTPEGARDFIIPSRLQPGKFYALPQSPQLFKQILMVAGFDRYFQIARCFRDEDLRADRQPEFTQLDMEMSFIEVEDVFTIIEELFKTVLKEVMNIEINTPFPRLSYEDAMNTYGSDKPDLRYDLKIVDVTNILKDLPLEFIRSTIEKDGVIKGIVLKNIVPSRREWSIIENKVRELKGKGIMWFTYADGELKSSISKYLDENIKDKLIKNLNLKSGDSFFCIAGTWKDVVKILGILRLEVAELFNMEKKEGLFFLWITDFPLFEYDEEERRIVAEHHPFTSPKDEDIPLLDTNPLKVKAKCYDLVLNGTELGSGSIRIHKKEIQEKVFNILGITPEDAKKKFGFLLEAFEYGAPPHGGIALGIDRIIAILTNSNSLREVIAFPKTQSGTCLLTGAPSEVDPKQLEEVHIKVVYPEEKKEED.

Residue Glu-175 participates in L-aspartate binding. Residues Gln-199–Lys-202 are aspartate. Arg-221 is a binding site for L-aspartate. Residues Arg-221–Glu-223 and Gln-230 each bind ATP. His-447 contacts L-aspartate. Position 481 (Glu-481) interacts with ATP. Arg-488 serves as a coordination point for L-aspartate. Gly-533–Arg-536 contributes to the ATP binding site.

Belongs to the class-II aminoacyl-tRNA synthetase family. Type 1 subfamily. Homodimer.

It is found in the cytoplasm. The enzyme catalyses tRNA(Asx) + L-aspartate + ATP = L-aspartyl-tRNA(Asx) + AMP + diphosphate. In terms of biological role, aspartyl-tRNA synthetase with relaxed tRNA specificity since it is able to aspartylate not only its cognate tRNA(Asp) but also tRNA(Asn). Reaction proceeds in two steps: L-aspartate is first activated by ATP to form Asp-AMP and then transferred to the acceptor end of tRNA(Asp/Asn). The chain is Aspartate--tRNA(Asp/Asn) ligase from Dictyoglomus turgidum (strain DSM 6724 / Z-1310).